The chain runs to 483 residues: Protein nucleotidyltransferase YdiU (483 aa).

The ATP site is built by Gly87, Gly89, Arg90, Lys110, Asp122, Gly123, Arg173, and Arg180. The Proton acceptor role is filled by Asp249. Mg(2+) is bound by residues Asn250 and Asp259. Asp259 contacts ATP.

It belongs to the SELO family. Requires Mg(2+) as cofactor. It depends on Mn(2+) as a cofactor.

The catalysed reaction is L-seryl-[protein] + ATP = 3-O-(5'-adenylyl)-L-seryl-[protein] + diphosphate. The enzyme catalyses L-threonyl-[protein] + ATP = 3-O-(5'-adenylyl)-L-threonyl-[protein] + diphosphate. It carries out the reaction L-tyrosyl-[protein] + ATP = O-(5'-adenylyl)-L-tyrosyl-[protein] + diphosphate. It catalyses the reaction L-histidyl-[protein] + UTP = N(tele)-(5'-uridylyl)-L-histidyl-[protein] + diphosphate. The catalysed reaction is L-seryl-[protein] + UTP = O-(5'-uridylyl)-L-seryl-[protein] + diphosphate. The enzyme catalyses L-tyrosyl-[protein] + UTP = O-(5'-uridylyl)-L-tyrosyl-[protein] + diphosphate. Nucleotidyltransferase involved in the post-translational modification of proteins. It can catalyze the addition of adenosine monophosphate (AMP) or uridine monophosphate (UMP) to a protein, resulting in modifications known as AMPylation and UMPylation. The protein is Protein nucleotidyltransferase YdiU of Pectobacterium atrosepticum (strain SCRI 1043 / ATCC BAA-672) (Erwinia carotovora subsp. atroseptica).